An 837-amino-acid polypeptide reads, in one-letter code: Protein translocase subunit SecA (837 aa).

Residues Gln85, 103-107 (GEGKT), and Asp493 contribute to the ATP site. Zn(2+)-binding residues include Cys821, Cys823, Cys832, and His833.

This sequence belongs to the SecA family. As to quaternary structure, monomer and homodimer. Part of the essential Sec protein translocation apparatus which comprises SecA, SecYEG and auxiliary proteins SecDF. Other proteins may also be involved. Zn(2+) serves as cofactor.

The protein localises to the cell membrane. It localises to the cytoplasm. The enzyme catalyses ATP + H2O + cellular proteinSide 1 = ADP + phosphate + cellular proteinSide 2.. In terms of biological role, part of the Sec protein translocase complex. Interacts with the SecYEG preprotein conducting channel. Has a central role in coupling the hydrolysis of ATP to the transfer of proteins into and across the cell membrane, serving as an ATP-driven molecular motor driving the stepwise translocation of polypeptide chains across the membrane. This chain is Protein translocase subunit SecA, found in Streptococcus pneumoniae (strain ATCC BAA-255 / R6).